The sequence spans 180 residues: MTLKELLVGFGTQVRSIWMIGLHAFAKRETRMYPEEPVYLPPRYRGRIVLTRDPDGEERCVACNLCAVACPVGCISLQKAETKDGRWYPEFFRINFSRCIFCGLCEEACPTTAIQLTPDFEMGEYKRQDLVYEKEDLLISGPGKYPEYNFYRMAGMAIDGKDKGEAENEAKPIDVKSLLP.

4Fe-4S ferredoxin-type domains are found at residues 50-80 and 90-119; these read LTRD…LQKA and EFFR…LTPD. Cys-60, Cys-63, Cys-66, Cys-70, Cys-99, Cys-102, Cys-105, and Cys-109 together coordinate [4Fe-4S] cluster.

This sequence belongs to the complex I 23 kDa subunit family. In terms of assembly, NDH-1 is composed of 13 different subunits. Subunits NuoA, H, J, K, L, M, N constitute the membrane sector of the complex. Requires [4Fe-4S] cluster as cofactor.

The protein resides in the cell inner membrane. The catalysed reaction is a quinone + NADH + 5 H(+)(in) = a quinol + NAD(+) + 4 H(+)(out). Its function is as follows. NDH-1 shuttles electrons from NADH, via FMN and iron-sulfur (Fe-S) centers, to quinones in the respiratory chain. The immediate electron acceptor for the enzyme in this species is believed to be ubiquinone. Couples the redox reaction to proton translocation (for every two electrons transferred, four hydrogen ions are translocated across the cytoplasmic membrane), and thus conserves the redox energy in a proton gradient. This Shigella boydii serotype 4 (strain Sb227) protein is NADH-quinone oxidoreductase subunit I.